A 352-amino-acid polypeptide reads, in one-letter code: N-terminal EF-hand calcium-binding protein 1 (352 aa).

Ser-4 carries the phosphoserine modification. EF-hand domains follow at residues 26–61 and 60–95; these read KGMS…GVLS and LSGE…HLGE. Positions 39, 41, 43, 45, and 50 each coordinate Ca(2+). Residues 135-163 adopt a coiled-coil conformation; the sequence is LLKETLNQLQSLQNSLECAMETTEEQTRQ. The interval 155-202 is disordered; that stretch reads ETTEEQTRQERQGPSKPEVLSIQWPGKRSSRRVQRHNSFSPNSPQFNV. A compositionally biased stretch (polar residues) spans 190 to 202; sequence HNSFSPNSPQFNV. Phosphoserine occurs at positions 192 and 197. Positions 209 to 275 form a coiled coil; sequence EEDNQWMTQI…EEFQLALKHY (67 aa). Residues 252–340 enclose the ABM domain; sequence MLVQRQMSVT…LETPELTSTM (89 aa).

In terms of assembly, interacts with STX1. May interact with CPNE6. In terms of tissue distribution, expressed in brain (at protein level). Expressed in the cerebral cortex only in layer 4, thalamic nuclei (the mediodorsal nucleus), hippocampus (a small band of pyramidal neurons at the boundary between CA1 and CA3), interneurons interspersed throughout the hippocampus proper, interneurons in the hilus, bodies of the neurons but also their dendritic projections (at protein level).

The protein localises to the cytoplasm. This is N-terminal EF-hand calcium-binding protein 1 (Necab1) from Mus musculus (Mouse).